The chain runs to 542 residues: CTP synthase (542 aa).

Residues 1–265 (MARYVFITGG…DSEVLSAFGI (265 aa)) are amidoligase domain. Ser13 lines the CTP pocket. Ser13 contacts UTP. Residue 14–19 (SLGKGI) coordinates ATP. Tyr54 provides a ligand contact to L-glutamine. Asp71 is a binding site for ATP. Mg(2+) contacts are provided by Asp71 and Glu139. CTP-binding positions include 146–148 (DIE), 186–191 (KTKPTQ), and Lys222. UTP is bound by residues 186 to 191 (KTKPTQ) and Lys222. Residues 291–541 (TIAVVGKYTG…IEAAIEQSRL (251 aa)) enclose the Glutamine amidotransferase type-1 domain. Residue Gly353 participates in L-glutamine binding. Cys380 serves as the catalytic Nucleophile; for glutamine hydrolysis. L-glutamine contacts are provided by residues 381–384 (FGMQ), Glu404, and Arg469. Residues His514 and Glu516 contribute to the active site.

The protein belongs to the CTP synthase family. As to quaternary structure, homotetramer.

It carries out the reaction UTP + L-glutamine + ATP + H2O = CTP + L-glutamate + ADP + phosphate + 2 H(+). The enzyme catalyses L-glutamine + H2O = L-glutamate + NH4(+). The catalysed reaction is UTP + NH4(+) + ATP = CTP + ADP + phosphate + 2 H(+). It participates in pyrimidine metabolism; CTP biosynthesis via de novo pathway; CTP from UDP: step 2/2. Its activity is regulated as follows. Allosterically activated by GTP, when glutamine is the substrate; GTP has no effect on the reaction when ammonia is the substrate. The allosteric effector GTP functions by stabilizing the protein conformation that binds the tetrahedral intermediate(s) formed during glutamine hydrolysis. Inhibited by the product CTP, via allosteric rather than competitive inhibition. Functionally, catalyzes the ATP-dependent amination of UTP to CTP with either L-glutamine or ammonia as the source of nitrogen. Regulates intracellular CTP levels through interactions with the four ribonucleotide triphosphates. This Brucella abortus (strain 2308) protein is CTP synthase.